Here is a 463-residue protein sequence, read N- to C-terminus: UDP-N-acetylmuramate--L-alanine ligase (463 aa).

112–118 (GTHGKTT) contributes to the ATP binding site.

Belongs to the MurCDEF family.

The protein localises to the cytoplasm. It carries out the reaction UDP-N-acetyl-alpha-D-muramate + L-alanine + ATP = UDP-N-acetyl-alpha-D-muramoyl-L-alanine + ADP + phosphate + H(+). It functions in the pathway cell wall biogenesis; peptidoglycan biosynthesis. Functionally, cell wall formation. The chain is UDP-N-acetylmuramate--L-alanine ligase from Dechloromonas aromatica (strain RCB).